Reading from the N-terminus, the 293-residue chain is MSPAPTTSAGPASSGIPPSSLPTSTVTEDDTKPSSSSSKANDLLPRYLTNDPSRTGYDPSIQWWMNYFKILTGQITPEGVEHYREDRYKANEARDCARCEADRDWLFQNSPVIRFLREKVANLNGVLDETNVVCRRCPSRIVVIPGNKEKGEEDRIEVARQGGGFSPDHGILLCANEMRNRGHLEDTLAHEMVHAWDHLRWKVDWFGEKSLRHAACTEIRASMLSGECRWTRESIVRGNWTLTQQFQNCVRMRAIQSVMARPTCKDDVHATKVVNEVWDSCFSDKRPFEEIYR.

Positions 1-51 (MSPAPTTSAGPASSGIPPSSLPTSTVTEDDTKPSSSSSKANDLLPRYLTND) are disordered. Residues 8 to 22 (SAGPASSGIPPSSLP) show a composition bias toward low complexity. Residue His-190 participates in a divalent metal cation binding. The active site involves Glu-191. His-194 serves as a coordination point for a divalent metal cation.

Belongs to the peptidase M76 family.

The protein localises to the mitochondrion inner membrane. In terms of biological role, has a dual role in the assembly of mitochondrial ATPase. Acts as a protease that removes N-terminal residues of mitochondrial ATPase CF(0) subunit 6 at the intermembrane space side. Also involved in the correct assembly of the membrane-embedded ATPase CF(0) particle, probably mediating association of subunit 6 with the subunit 9 ring. In Neurospora crassa (strain ATCC 24698 / 74-OR23-1A / CBS 708.71 / DSM 1257 / FGSC 987), this protein is Mitochondrial inner membrane protease atp23 (atp23).